A 690-amino-acid chain; its full sequence is Amino-acid acetyltransferase, mitochondrial (690 aa).

Positions 62–93 are disordered; that stretch reads RFPSVKKPKPPIPRQNQGAVETQSGKENEKPG. Polar residues predominate over residues 75 to 84; it reads RQNQGAVETQ. An N-acetyltransferase domain is found at 508–679; that stretch reads DGHHLTLDDP…DYEAVCRSIQ (172 aa).

Belongs to the acetyltransferase family.

The protein localises to the mitochondrion. It carries out the reaction L-glutamate + acetyl-CoA = N-acetyl-L-glutamate + CoA + H(+). It participates in amino-acid biosynthesis; L-arginine biosynthesis; N(2)-acetyl-L-ornithine from L-glutamate: step 1/4. In terms of biological role, N-acetylglutamate synthase involved in arginine biosynthesis. The polypeptide is Amino-acid acetyltransferase, mitochondrial (arg2) (Talaromyces stipitatus (strain ATCC 10500 / CBS 375.48 / QM 6759 / NRRL 1006) (Penicillium stipitatum)).